The chain runs to 20 residues: Brevinin-1T (20 aa).

A disulfide bridge connects residues cysteine 14 and cysteine 20.

The protein belongs to the frog skin active peptide (FSAP) family. Brevinin subfamily. In terms of tissue distribution, expressed by the skin glands.

It localises to the secreted. Functionally, antibacterial activity against representative Gram-negative and Gram-positive bacteria and exhibits a very high hemolytic activity. In Rana temporaria (European common frog), this protein is Brevinin-1T.